Consider the following 1099-residue polypeptide: DNA-directed RNA polymerase subunit beta (1099 aa).

It belongs to the RNA polymerase beta chain family. In plastids the minimal PEP RNA polymerase catalytic core is composed of four subunits: alpha, beta, beta', and beta''. When a (nuclear-encoded) sigma factor is associated with the core the holoenzyme is formed, which can initiate transcription.

It localises to the plastid. It is found in the chloroplast. It carries out the reaction RNA(n) + a ribonucleoside 5'-triphosphate = RNA(n+1) + diphosphate. DNA-dependent RNA polymerase catalyzes the transcription of DNA into RNA using the four ribonucleoside triphosphates as substrates. The chain is DNA-directed RNA polymerase subunit beta from Bigelowiella natans (Pedinomonas minutissima).